Reading from the N-terminus, the 79-residue chain is uncharacterized protein (79 aa).

It belongs to the UPF0440 family.

This is an uncharacterized protein from Methanocella arvoryzae (strain DSM 22066 / NBRC 105507 / MRE50).